A 541-amino-acid polypeptide reads, in one-letter code: Calcium/calmodulin-dependent protein kinase kinase (541 aa).

A disordered region spans residues 83–106 (AVQEDDEAGPHSSNNLAATMSPNL). A compositionally biased stretch (polar residues) spans 93–106 (HSSNNLAATMSPNL). The Protein kinase domain occupies 130-411 (YRLMEEIGQG…LHEVKVHTWV (282 aa)). ATP is bound by residues 136–144 (IGQGSYGIV) and lysine 159. An RP domain region spans residues 169–190 (NFACFRQPPPRRNKENAAPSVL). Catalysis depends on aspartate 276, which acts as the Proton acceptor. The interval 437–442 (ENCVRV) is autoinhibitory domain. Positions 440–465 (VRVIPRLDTLILVKAMGHRKRFGNPF) are calmodulin-binding. The disordered stretch occupies residues 462 to 512 (GNPFRNKLSAQSSIRDRRKSSSVKDPTYVPPPNSPPATSNNNLNSTKVDRP). Residues 497 to 507 (PATSNNNLNST) show a composition bias toward low complexity.

It belongs to the protein kinase superfamily. Ser/Thr protein kinase family. It depends on Mg(2+) as a cofactor. Expressed in head and tail neurons and vulval muscles.

The protein localises to the cytoplasm. It carries out the reaction L-seryl-[protein] + ATP = O-phospho-L-seryl-[protein] + ADP + H(+). The enzyme catalyses L-threonyl-[protein] + ATP = O-phospho-L-threonyl-[protein] + ADP + H(+). With respect to regulation, activated by Ca(2+)/calmodulin. Binding of calmodulin may relieve intrasteric autoinhibition. Functionally, calcium/calmodulin-dependent protein kinase which phosphorylates cmk-1. Component of a calcium-triggered signaling cascade involved in CRE-mediated transcriptional activation, probably through cmk-1-mediated crh-1/CREB phosphorylation. Plays a role in salt-avoidance learning behavior via the phosphorylation of cmk-1. This chain is Calcium/calmodulin-dependent protein kinase kinase, found in Caenorhabditis elegans.